The following is a 449-amino-acid chain: MKEKKPRLFGTSGIRGRFGEKVTLELTAEHRKALATHLGGDGEVVVGYDTRTSSQLLENALIAGIVECGCDVTRLGMVPTPLVGYAASRLGAAAGVMITASHNPAPYNGIKLWNPDGMAYRPSQERVIESIIHSRDFKRKAWDELGSITTVDMRDDYVRAVLETVEIKKPLKVVIDSGCGAASHLSPLIFRKAGCRVITLNSQPDGFFPGRDPEPVPENLSELMETVRSTGADLGIAHDGDADRMVAIDDQGRFASFDKLLALMAREIGGKIITTVDASLCVDECLGDRGEVIRTRVGDVHVANTIAEEGARFGGEPSGTWLHPDFCMCPDGILSALRVAELVSARGPLSELLEEVPSYPNIRDKVPCPDEKKDIIMERVAAELSDQFSETSDINTIDGVRISLDDGSWVLVRPSGTEPYIRITLEGKTEEKARYIHERTRGYLENVIG.

Catalysis depends on S101, which acts as the Phosphoserine intermediate. Mg(2+) contacts are provided by S101, D239, D241, and D243. S101 carries the phosphoserine modification.

It belongs to the phosphohexose mutase family. It depends on Mg(2+) as a cofactor. Post-translationally, activated by phosphorylation.

It carries out the reaction alpha-D-glucosamine 1-phosphate = D-glucosamine 6-phosphate. Its function is as follows. Catalyzes the conversion of glucosamine-6-phosphate to glucosamine-1-phosphate. The sequence is that of Probable phosphoglucosamine mutase from Methanothermobacter thermautotrophicus (strain ATCC 29096 / DSM 1053 / JCM 10044 / NBRC 100330 / Delta H) (Methanobacterium thermoautotrophicum).